Consider the following 261-residue polypeptide: Class II histocompatibility antigen, M beta 1 chain (261 aa).

The N-terminal stretch at 1 to 18 is a signal peptide; the sequence is MAALWLLLLVLSLHCMGA. A beta-1 region spans residues 19–112; sequence GGFVAHVEST…PFWNALTHRT (94 aa). Residues 19–218 are Lumenal-facing; sequence GGFVAHVEST…PGLSPIQTVK (200 aa). 3 cysteine pairs are disulfide-bonded: cysteine 29/cysteine 97, cysteine 43/cysteine 53, and cysteine 135/cysteine 192. Asparagine 75 is a glycosylation site (N-linked (GlcNAc...) asparagine). Positions 113–207 are beta-2; that stretch reads RPPSVRVAQT…GTSEPIRGDW (95 aa). An Ig-like C1-type domain is found at 114–204; that stretch reads PPSVRVAQTT…QHSGTSEPIR (91 aa). The connecting peptide stretch occupies residues 208-218; sequence TPGLSPIQTVK. The chain crosses the membrane as a helical span at residues 219–239; sequence VSVSAATLGLGFIIFCVGFFR. Residues 240–261 lie on the Cytoplasmic side of the membrane; it reads WRKSHSSSYTPLSGSTYPEGRH. The short motif at 248 to 251 is the YXXZ motif element; it reads YTPL.

This sequence belongs to the MHC class II family. As to quaternary structure, heterodimer of an alpha chain (DMA) and a beta chain (DMB). Interacts with MHCII; this interaction mediates rapid selection of high-affinity peptides.

It is found in the late endosome membrane. Its subcellular location is the lysosome membrane. Functionally, plays a critical role in catalyzing the release of class II-associated invariant chain peptide (CLIP) from newly synthesized MHC class II molecules and freeing the peptide binding site for acquisition of antigenic peptides. This chain is Class II histocompatibility antigen, M beta 1 chain (H2-DMb1), found in Mus musculus (Mouse).